Consider the following 39-residue polypeptide: Omega-theraphotoxin-Bs1b (39 aa).

Disulfide bonds link Cys-4-Cys-25, Cys-8-Cys-31, and Cys-17-Cys-36.

The protein belongs to the neurotoxin 12 (Hwtx-2) family. 06 (TXP1) subfamily. In terms of tissue distribution, expressed by the venom gland.

It is found in the secreted. Functionally, inhibits voltage-gated calcium channels (Cav) in rat cerebellar granule cells. Has insecticidal activity. In Brachypelma smithi (Mexican red knee tarantula), this protein is Omega-theraphotoxin-Bs1b.